The following is a 198-amino-acid chain: dTTP/UTP pyrophosphatase (198 aa).

D72 (proton acceptor) is an active-site residue.

It belongs to the Maf family. YhdE subfamily. It depends on a divalent metal cation as a cofactor.

It localises to the cytoplasm. The enzyme catalyses dTTP + H2O = dTMP + diphosphate + H(+). The catalysed reaction is UTP + H2O = UMP + diphosphate + H(+). Its function is as follows. Nucleoside triphosphate pyrophosphatase that hydrolyzes dTTP and UTP. May have a dual role in cell division arrest and in preventing the incorporation of modified nucleotides into cellular nucleic acids. This is dTTP/UTP pyrophosphatase from Pseudomonas fluorescens (strain Pf0-1).